Here is a 107-residue protein sequence, read N- to C-terminus: uncharacterized protein (107 aa).

The helical transmembrane segment at leucine 62–alanine 79 threads the bilayer.

It is found in the nucleus membrane. This is an uncharacterized protein from Schizosaccharomyces pombe (strain 972 / ATCC 24843) (Fission yeast).